The chain runs to 404 residues: Plasma serine protease inhibitor (404 aa).

Residues methionine 1–leucine 19 form the signal peptide. Residues arginine 20–lysine 24 constitute a propeptide, removed in mature form. Threonine 35 and threonine 36 each carry an O-linked (GalNAc...) threonine glycan. N-linked (GlcNAc...) asparagine glycosylation is found at asparagine 245, asparagine 258, and asparagine 334.

It belongs to the serpin family. In terms of assembly, forms protease inhibiting heterodimers in extracellular body fluids with serine proteases such as activated protein C/coagulation factor V/F5, acrosin/ACR, chymotrypsinogen B/CTRB1, prothrombin/F2, factor Xa/F10, factor XI/F11, kallikrein/KLKB1, tissue kallikrein, trypsin/PRSS1, prostate specific antigen/KLK3, tissue plasminogen activator/PLAT and urinary plasminogen activator/PLAU. Forms membrane-anchored serine proteases inhibiting heterodimers with TMPRSS7 and TMPRSS11E. Interacts with SEMG2. Post-translationally, N-glycosylated; glycans consist of a mixture of sialylated bi- (including sialyl-Lewis X epitopes), tri- and tetra-antennary complex-type chains; affects the maximal heparin- and thrombomodulin-enhanced rates of thrombin inhibition. O-glycosylated; further modified with 2 sialic acid residues. Proteolytically cleaved at the N-terminus; inhibits slightly the heparin- and thrombomodulin-enhanced rates of thrombin inhibition. N- and O-glycosylated. Proteolytically cleaved. Inhibition of proteases is accompanied by formation of a stable enzyme-inhibitor complex and by degradation of the serpin to lower molecular weight derivatives. As to expression, expressed strongly in the liver, and moderately in the kidney and testis, but not in other tissues tested.

The protein localises to the secreted. Its subcellular location is the extracellular space. Its activity is regulated as follows. Its inhibitory activity is greatly enhanced in the presence of glycosaminoglycans, heparin, thrombomodulin and phospholipids vesicles. Heparin-dependent serine protease inhibitor acting in body fluids and secretions. Inactivates serine proteases by binding irreversibly to their serine activation site. Involved in the regulation of intravascular and extravascular proteolytic activities. Plays hemostatic roles in the blood plasma. Acts as a procoagulant and pro-inflammatory factor by inhibiting the anticoagulant activated protein C factor as well as the generation of activated protein C factor by the thrombin/thrombomodulin complex. Acts as an anticoagulant factor by inhibiting blood coagulation factors like prothrombin, factor XI, factor Xa, plasma kallikrein and fibrinolytic enzymes such as tissue- and urinary-type plasminogen activators. In seminal plasma, inactivates several serine proteases implicated in the reproductive system. Inhibits the serpin acrosin; indirectly protects component of the male genital tract from being degraded by excessive released acrosin. Inhibits tissue- and urinary-type plasminogen activator, prostate-specific antigen and kallikrein activities; has a control on the sperm motility and fertilization. Inhibits the activated protein C-catalyzed degradation of SEMG1 and SEMG2; regulates the degradation of semenogelin during the process of transfer of spermatozoa from the male reproductive tract into the female tract. In urine, inhibits urinary-type plasminogen activator and kallikrein activities. Inactivates membrane-anchored serine proteases activities such as MPRSS7 and TMPRSS11E. Inhibits urinary-type plasminogen activator-dependent tumor cell invasion and metastasis. May also play a non-inhibitory role in seminal plasma and urine as a hydrophobic hormone carrier by its binding to retinoic acid. The sequence is that of Plasma serine protease inhibitor (SERPINA5) from Bos taurus (Bovine).